Consider the following 546-residue polypeptide: Chaperonin GroEL (546 aa).

ATP-binding positions include 30–33 (TLGP), K51, 87–91 (DGTTT), G415, and D495.

Belongs to the chaperonin (HSP60) family. In terms of assembly, forms a cylinder of 14 subunits composed of two heptameric rings stacked back-to-back. Interacts with the co-chaperonin GroES.

The protein resides in the cytoplasm. It catalyses the reaction ATP + H2O + a folded polypeptide = ADP + phosphate + an unfolded polypeptide.. Functionally, together with its co-chaperonin GroES, plays an essential role in assisting protein folding. The GroEL-GroES system forms a nano-cage that allows encapsulation of the non-native substrate proteins and provides a physical environment optimized to promote and accelerate protein folding. This chain is Chaperonin GroEL, found in Brucella ovis (strain ATCC 25840 / 63/290 / NCTC 10512).